The following is a 168-amino-acid chain: Cyclic pyranopterin monophosphate synthase (168 aa).

Substrate is bound by residues 83 to 85 (LCH) and 121 to 122 (ME). Aspartate 136 is a catalytic residue.

The protein belongs to the MoaC family. In terms of assembly, homohexamer; trimer of dimers.

The catalysed reaction is (8S)-3',8-cyclo-7,8-dihydroguanosine 5'-triphosphate = cyclic pyranopterin phosphate + diphosphate. It functions in the pathway cofactor biosynthesis; molybdopterin biosynthesis. Catalyzes the conversion of (8S)-3',8-cyclo-7,8-dihydroguanosine 5'-triphosphate to cyclic pyranopterin monophosphate (cPMP). This Nostoc sp. (strain PCC 7120 / SAG 25.82 / UTEX 2576) protein is Cyclic pyranopterin monophosphate synthase.